Here is a 134-residue protein sequence, read N- to C-terminus: U-scoloptoxin(05)-Er2a (134 aa).

Residues 1-19 (MTFVVAAVVLLTVVPLATP) form the signal peptide.

It belongs to the scoloptoxin-05 family. Contains 5 disulfide bonds. In terms of tissue distribution, expressed by the venom gland.

The protein resides in the secreted. In Ethmostigmus rubripes (Giant centipede), this protein is U-scoloptoxin(05)-Er2a.